The chain runs to 98 residues: Ferredoxin-like protein (98 aa).

It to ferredoxins from P.putida and C.tartarivorum, ferredoxin I from A.vinelandii, ferredoxin II from D.desulfuricans.

Functionally, could be a 3Fe-4S cluster-containing protein. In Rhizobium leguminosarum, this protein is Ferredoxin-like protein (fixX).